Consider the following 315-residue polypeptide: MTIRLLCYMGFYFLGAGLMEADIYQTPRYLVIGTGKKITLECSQTMGHDKMYWYQQDPGMELHLIHYSYGVNSTEKGDLSSESTVSRIRTEHFPLTLESARPSHTSQYLCASSEARGLAEFTDTQYFGPGTRLTVLEDLKNVFPPEVAVFEPSEAEISHTQKATLVCLATGFYPDHVELSWWVNGKEVHSGVSTDPQPLKEQPALNDSRYCLSSRLRVSATFWQNPRNHFRCQVQFYGLSENDEWTQDRAKPVTQIVSAEAWGRADCGFTSESYQQGVLSATILYEILLGKATLYAVLVSALVLMAMVKRKDSRG.

An N-terminal signal peptide occupies residues 1 to 21 (MTIRLLCYMGFYFLGAGLMEA). The Ig-like V-type domain maps to 22–114 (DIYQTPRYLV…TSQYLCASSE (93 aa)). Residues 22–114 (DIYQTPRYLV…TSQYLCASSE (93 aa)) form a t cell receptor beta variable 25-1 region. C42 and C110 are disulfide-bonded. The segment at 46–50 (MGHDK) is CDR1. A CDR2 region spans residues 68–73 (SYGVNS). The N-linked (GlcNAc...) asparagine glycan is linked to N72. The segment at 110 to 127 (CASSEARGLAEFTDTQYF) is CDR3. Residues 122-136 (TDTQYFGPGTRLTVL) form a t cell receptor beta joining 2-3 region. The interval 138 to 315 (DLKNVFPPEV…AMVKRKDSRG (178 aa)) is t cell receptor beta constant 2. Residues 145 to 254 (PEVAVFEPSE…WTQDRAKPVT (110 aa)) form the Ig-like C1-type domain. A disulfide bond links C167 and C232. N206 carries N-linked (GlcNAc...) asparagine glycosylation. The connecting peptide stretch occupies residues 267–281 (CGFTSESYQQGVLSA). Residues 282-304 (TILYEILLGKATLYAVLVSALVL) form a helical membrane-spanning segment. Residues 305–315 (MAMVKRKDSRG) are Cytoplasmic-facing.

Disulfide-linked heterodimer with TRAV38-2DV8*01J31*01C*01 alpha chain. The alpha-beta TR associates with the transmembrane signaling CD3 coreceptor proteins to form the TR-CD3 (TCR). The assembly of alpha-beta TR heterodimers with CD3 occurs in the endoplasmic reticulum where a single alpha-beta TR heterodimer associates with one CD3D-CD3E heterodimer, one CD3G-CD3E heterodimer and one CD247 homodimer forming a stable octameric structure. CD3D-CD3E and CD3G-CD3E heterodimers preferentially associate with TR alpha and TR beta chains (via TM domain), respectively. The association of the CD247 homodimer is the last step of TCR assembly in the endoplasmic reticulum and is required for transport to the cell surface. Expressed in MR1-restricted CD8-positive T cells.

It is found in the cell membrane. In terms of biological role, the beta chain of TRAV38-2DV8*01J31*01C*01/TRBV25-1*01J2S3*01C2*01 alpha-beta T cell receptor (TR) clonotype that displays pan-cancer cell recognition via the invariant MR1 molecule. On CD8-positive T cell clone MC.7.G5, likely recognizes tumor-specific or -associated metabolite(s) essential for cancer cell survival, triggering killing of many cancer cell types including lung, melanoma, leukemia, colon, breast, prostate, bone and ovarian cancer cells. Mediates cancer cell cytotoxicity in an HLA-independent manner. Has no reactivity to healthy cells even stressed or infected by bacteria. Antigen recognition initiates TR-CD3 clustering on the cell surface and intracellular activation of LCK that phosphorylates the ITAM motifs of CD3G, CD3D, CD3E and CD247 enabling the recruitment of ZAP70. In turn, ZAP70 phosphorylates LAT, which recruits numerous signaling molecules to form the LAT signalosome. The LAT signalosome propagates signal branching to three major signaling pathways, the calcium, the mitogen-activated protein kinase (MAPK) kinase and the nuclear factor NF-kappa-B (NF-kB) pathways, leading to the mobilization of transcription factors that are critical for gene expression and essential for T cell differentiation into effector/memory T cells. This is T cell receptor beta chain MC.7.G5 from Homo sapiens (Human).